The sequence spans 432 residues: Sonic hedgehog protein (432 aa).

The N-terminal stretch at 1–26 (MDEMILLRRVLLAGFICALLVPSGLS) is a signal peptide. Cys-27 carries N-palmitoyl cysteine lipidation. Positions 35–41 (TRKRFKK) match the Cardin-Weintraub motif. 7 residues coordinate Ca(2+): Glu-92, Glu-93, Asp-98, Thr-128, Glu-129, Asp-132, and Asp-134. Zn(2+) contacts are provided by His-143, Asp-150, and His-185. Gly-200 carries Cholesterol glycine ester lipidation.

This sequence belongs to the hedgehog family. Interacts with HHATL/GUP1 which negatively regulates HHAT-mediated palmitoylation of the SHH N-terminus. Interacts with BOC and CDON. Interacts with HHIP. Interacts with DISP1 via its cholesterol anchor. Interacts with SCUBE2. As to quaternary structure, multimer. In terms of processing, the C-terminal domain displays an autoproteolysis activity and a cholesterol transferase activity. Both activities result in the cleavage of the full-length protein and covalent attachment of a cholesterol moiety to the C-terminal of the newly generated N-terminal fragment (ShhN). Cholesterylation is required for the sonic hedgehog protein N-product targeting to lipid rafts and multimerization. ShhN is the active species in both local and long-range signaling, whereas the C-product (ShhC) is degraded in the reticulum endoplasmic. N-palmitoylation by HHAT of ShhN is required for sonic hedgehog protein N-product multimerization and full activity. It is a prerequisite for the membrane-proximal positioning and the subsequent shedding of this N-terminal peptide. Post-translationally, the lipidated N- and C-terminal peptides of ShhNp can be cleaved (shedding). The N-terminal palmitoylated peptide is cleaved at the Cardin-Weintraub (CW) motif site. The cleavage reduced the interactions with heparan sulfate. The cleavage is enhanced by SCUBE2.

It is found in the endoplasmic reticulum membrane. It localises to the golgi apparatus membrane. The protein localises to the cell membrane. The catalysed reaction is glycyl-L-cysteinyl-[protein] + cholesterol + H(+) = [protein]-C-terminal glycyl cholesterol ester + N-terminal L-cysteinyl-[protein]. The C-terminal part of the sonic hedgehog protein precursor displays an autoproteolysis and a cholesterol transferase activity. Both activities result in the cleavage of the full-length protein into two parts (ShhN and ShhC) followed by the covalent attachment of a cholesterol moiety to the C-terminal of the newly generated ShhN. Both activities occur in the endoplasmic reticulum. Once cleaved, ShhC is degraded in the endoplasmic reticulum. Its function is as follows. The dually lipidated sonic hedgehog protein N-product (ShhNp) is a morphogen which is essential for a variety of patterning events during development. Induces ventral cell fate in the neural tube and somites. Involved in the patterning of the anterior-posterior axis of the developing limb bud. Essential for axon guidance. Binds to the patched (PTCH1) receptor, which functions in association with smoothened (SMO), to activate the transcription of target genes. In the absence of SHH, PTCH1 represses the constitutive signaling activity of SMO. This chain is Sonic hedgehog protein, found in Cynops pyrrhogaster (Japanese fire-bellied newt).